Consider the following 394-residue polypeptide: Elongation factor Tu (394 aa).

Residues 10–204 enclose the tr-type G domain; that stretch reads KEHANIGTIG…AVDDYIPTPE (195 aa). Residues 19–26 are G1; the sequence is GHVDHGKT. Residue 19–26 participates in GTP binding; that stretch reads GHVDHGKT. Position 26 (threonine 26) interacts with Mg(2+). The G2 stretch occupies residues 60 to 64; sequence GITIN. Residues 81–84 are G3; it reads DCPG. Residues 81–85 and 136–139 contribute to the GTP site; these read DCPGH and NKVD. The tract at residues 136 to 139 is G4; that stretch reads NKVD. The G5 stretch occupies residues 174 to 176; sequence SAL.

This sequence belongs to the TRAFAC class translation factor GTPase superfamily. Classic translation factor GTPase family. EF-Tu/EF-1A subfamily. As to quaternary structure, monomer.

It localises to the cytoplasm. The catalysed reaction is GTP + H2O = GDP + phosphate + H(+). GTP hydrolase that promotes the GTP-dependent binding of aminoacyl-tRNA to the A-site of ribosomes during protein biosynthesis. This is Elongation factor Tu from Staphylococcus epidermidis (strain ATCC 35984 / DSM 28319 / BCRC 17069 / CCUG 31568 / BM 3577 / RP62A).